A 224-amino-acid chain; its full sequence is 7-cyano-7-deazaguanine synthase (224 aa).

ATP is bound at residue phenylalanine 14–leucine 24. Residues cysteine 190, cysteine 198, cysteine 201, and cysteine 204 each coordinate Zn(2+).

This sequence belongs to the QueC family. Zn(2+) serves as cofactor.

It carries out the reaction 7-carboxy-7-deazaguanine + NH4(+) + ATP = 7-cyano-7-deazaguanine + ADP + phosphate + H2O + H(+). It functions in the pathway purine metabolism; 7-cyano-7-deazaguanine biosynthesis. In terms of biological role, catalyzes the ATP-dependent conversion of 7-carboxy-7-deazaguanine (CDG) to 7-cyano-7-deazaguanine (preQ(0)). This chain is 7-cyano-7-deazaguanine synthase, found in Haemophilus ducreyi (strain 35000HP / ATCC 700724).